The following is a 62-amino-acid chain: Photosystem II reaction center protein Z (62 aa).

2 consecutive transmembrane segments (helical) span residues 8–28 (SVFA…VVLA) and 41–61 (FSGA…NSFI).

Belongs to the PsbZ family. As to quaternary structure, PSII is composed of 1 copy each of membrane proteins PsbA, PsbB, PsbC, PsbD, PsbE, PsbF, PsbH, PsbI, PsbJ, PsbK, PsbL, PsbM, PsbT, PsbY, PsbZ, Psb30/Ycf12, at least 3 peripheral proteins of the oxygen-evolving complex and a large number of cofactors. It forms dimeric complexes.

The protein localises to the plastid. Its subcellular location is the chloroplast thylakoid membrane. Its function is as follows. May control the interaction of photosystem II (PSII) cores with the light-harvesting antenna, regulates electron flow through the 2 photosystem reaction centers. PSII is a light-driven water plastoquinone oxidoreductase, using light energy to abstract electrons from H(2)O, generating a proton gradient subsequently used for ATP formation. The polypeptide is Photosystem II reaction center protein Z (Chaetosphaeridium globosum (Charophycean green alga)).